The chain runs to 251 residues: Octanoyltransferase (251 aa).

One can recognise a BPL/LPL catalytic domain in the interval 49 to 230; the sequence is DEIADQILVL…DLDDAFAGRL (182 aa). Substrate-binding positions include 87–94, 160–162, and 173–175; these read RGGRITWH, ALG, and GLA. Cys-191 functions as the Acyl-thioester intermediate in the catalytic mechanism.

The protein belongs to the LipB family.

The protein resides in the cytoplasm. It catalyses the reaction octanoyl-[ACP] + L-lysyl-[protein] = N(6)-octanoyl-L-lysyl-[protein] + holo-[ACP] + H(+). The protein operates within protein modification; protein lipoylation via endogenous pathway; protein N(6)-(lipoyl)lysine from octanoyl-[acyl-carrier-protein]: step 1/2. Functionally, catalyzes the transfer of endogenously produced octanoic acid from octanoyl-acyl-carrier-protein onto the lipoyl domains of lipoate-dependent enzymes. Lipoyl-ACP can also act as a substrate although octanoyl-ACP is likely to be the physiological substrate. The polypeptide is Octanoyltransferase (Corynebacterium efficiens (strain DSM 44549 / YS-314 / AJ 12310 / JCM 11189 / NBRC 100395)).